We begin with the raw amino-acid sequence, 68 residues long: NSAHPCCDPVKCEPREGEHCISGPCCRNCKFLNAGTICKKAMLDGLNDYCTGISSDCPRNRYKGKEDD.

A Disintegrin domain is found at asparagine 1–lysine 65. Intrachain disulfides connect cysteine 6–cysteine 29, cysteine 20–cysteine 26, cysteine 25–cysteine 50, and cysteine 38–cysteine 57. The Cell attachment site; atypical (MLD) motif lies at methionine 42–aspartate 44.

This sequence belongs to the disintegrin family. Dimeric disintegrin subfamily. As to quaternary structure, heterodimer; disulfide-linked. As to expression, expressed by the venom gland.

Its subcellular location is the secreted. Poor inhibitor of platelet aggregation. The disintegrin inhibits the adhesion of both the alpha-4/beta-1 (ITGA4/ITGB1) and the alpha-5/beta-1 (ITGA5/ITGB1) integrins to VCAM-1 and fibronectin respectively with almost the same degree of specificity. Inhibition on alpha-IIb/beta-3 (ITGA2B/ITGB3) is low. The polypeptide is Disintegrin EMS11A (Echis multisquamatus (Central Asian sand viper)).